Here is a 382-residue protein sequence, read N- to C-terminus: Probable inactive dehydrogenase easA (382 aa).

FMN contacts are provided by residues 25–27 (PMT), Ala60, Gln102, and His171. Residues His171 and Asn174 each contribute to the substrate site. Residues Lys223, Gly299, 324–325 (GR), and Arg325 each bind FMN. Position 352 (Tyr352) interacts with substrate.

It belongs to the NADH:flavin oxidoreductase/NADH oxidase family.

Functionally, probable inactive dehydrogenase; part of the gene cluster that mediates the biosynthesis of fungal ergot alkaloid. DmaW catalyzes the first step of ergot alkaloid biosynthesis by condensing dimethylallyl diphosphate (DMAP) and tryptophan to form 4-dimethylallyl-L-tryptophan. The second step is catalyzed by the methyltransferase easF that methylates 4-dimethylallyl-L-tryptophan in the presence of S-adenosyl-L-methionine, resulting in the formation of 4-dimethylallyl-L-abrine. The catalase easC and the FAD-dependent oxidoreductase easE then transform 4-dimethylallyl-L-abrine to chanoclavine-I which is further oxidized by easD in the presence of NAD(+), resulting in the formation of chanoclavine-I aldehyde. Agroclavine dehydrogenase easG then mediates the conversion of chanoclavine-I aldehyde to agroclavine via a non-enzymatic adduct reaction: the substrate is an iminium intermediate that is formed spontaneously from chanoclavine-I aldehyde in the presence of glutathione. Further conversion of agroclavine to paspalic acid is a two-step process involving oxidation of agroclavine to elymoclavine and of elymoclavine to paspalic acid, the second step being performed by the elymoclavine oxidase cloA. However, cloA does not encode a functional enzyme indicating that C.fusiformis terminates its ergot alkaloid pathway at elymoclavine. This is Probable inactive dehydrogenase easA from Claviceps fusiformis (Ergot fungus).